The sequence spans 194 residues: Chromophore lyase CpcT/CpeT 1 (194 aa).

It belongs to the CpcT/CpeT biliprotein lyase family.

In terms of biological role, covalently attaches a chromophore to Cys residue(s) of phycobiliproteins. This chain is Chromophore lyase CpcT/CpeT 1, found in Microcystis aeruginosa (strain NIES-843 / IAM M-2473).